Consider the following 323-residue polypeptide: o-succinylbenzoate synthase (323 aa).

Lys134 (proton donor) is an active-site residue. Mg(2+) is bound by residues Asp162, Glu191, and Asp214. Catalysis depends on Lys236, which acts as the Proton acceptor.

It belongs to the mandelate racemase/muconate lactonizing enzyme family. MenC type 1 subfamily. It depends on a divalent metal cation as a cofactor.

The enzyme catalyses (1R,6R)-6-hydroxy-2-succinyl-cyclohexa-2,4-diene-1-carboxylate = 2-succinylbenzoate + H2O. It participates in quinol/quinone metabolism; 1,4-dihydroxy-2-naphthoate biosynthesis; 1,4-dihydroxy-2-naphthoate from chorismate: step 4/7. Its pathway is quinol/quinone metabolism; menaquinone biosynthesis. Functionally, converts 2-succinyl-6-hydroxy-2,4-cyclohexadiene-1-carboxylate (SHCHC) to 2-succinylbenzoate (OSB). The chain is o-succinylbenzoate synthase from Yersinia enterocolitica serotype O:8 / biotype 1B (strain NCTC 13174 / 8081).